A 221-amino-acid chain; its full sequence is Retinitis pigmentosa 9 protein (221 aa).

3 stretches are compositionally biased toward basic and acidic residues: residues 1-10 (MSSRPGREDV), 17-29 (RPRE…LQRR), and 60-69 (IKEDETKPED). The disordered stretch occupies residues 1-76 (MSSRPGREDV…PEDCIPDVPG (76 aa)). The PIM1-binding stretch occupies residues 1 to 155 (MSSRPGREDV…RDNKRHEKDV (155 aa)). A CCHC-type zinc finger spans residues 104–122 (QCWRCKRYGHRTGDKECPF). K129 is covalently cross-linked (Glycyl lysine isopeptide (Lys-Gly) (interchain with G-Cter in SUMO2)). The span at 147–156 (DNKRHEKDVR) shows a compositional bias: basic and acidic residues. Positions 147 to 221 (DNKRHEKDVR…SKSNEGSDSE (75 aa)) are disordered. Basic residues predominate over residues 184 to 212 (KHKKKKKKEKHKKRKKEKKKKKKRKHKSS). Phosphoserine; by PIM1 occurs at positions 212 and 214.

Binds to PIM1. Binds to ZNHIT4. In terms of tissue distribution, appears to be expressed in a wide range of tissues.

It is found in the nucleus. Its function is as follows. Is thought to be a target protein for the PIM1 kinase. May play some roles in B-cell proliferation in association with PIM1. The protein is Retinitis pigmentosa 9 protein (RP9) of Homo sapiens (Human).